Here is a 230-residue protein sequence, read N- to C-terminus: UPF0758 protein ABC2615 (230 aa).

The region spanning 104–226 is the MPN domain; the sequence is VISSPEDAAE…FISLKERGFF (123 aa). Zn(2+) is bound by residues H175, H177, and D188. The short motif at 175–188 is the JAMM motif element; sequence HNHPSGDPSPSPED.

It belongs to the UPF0758 family.

The sequence is that of UPF0758 protein ABC2615 from Shouchella clausii (strain KSM-K16) (Alkalihalobacillus clausii).